Here is a 231-residue protein sequence, read N- to C-terminus: MKFTFVTLFQNIVEGYFNDSILKRAIQKEILEVEYLNPRDFSDSRHNKVDDSAVGGGAGMVMNPQPLFDALDELKRVDSEVHILFLTPVAKSFKQNDAKRLSKKPHIAFVSGRYEGIDERVIEKYADEVFSIGDYILTGGELPSLVICDAISRNVDGVLGNSDSLSVESFETELLEAPSFSKPEIYKNISVPSEYLKGNHSKIRSLKLALSTCKTKFFRPEQLLKHKTQLH.

S-adenosyl-L-methionine contacts are provided by residues Gly-112 and 132 to 137; that span reads IGDYIL.

This sequence belongs to the RNA methyltransferase TrmD family. Homodimer.

It localises to the cytoplasm. The catalysed reaction is guanosine(37) in tRNA + S-adenosyl-L-methionine = N(1)-methylguanosine(37) in tRNA + S-adenosyl-L-homocysteine + H(+). Its function is as follows. Specifically methylates guanosine-37 in various tRNAs. The protein is tRNA (guanine-N(1)-)-methyltransferase of Sulfurimonas denitrificans (strain ATCC 33889 / DSM 1251) (Thiomicrospira denitrificans (strain ATCC 33889 / DSM 1251)).